Consider the following 176-residue polypeptide: Putative metal-dependent hydrolase BLi00869/BLi00870/BL03027 (176 aa).

Positions 65, 158, and 162 each coordinate Zn(2+).

This sequence belongs to the metal hydrolase YfiT family. Homodimer. Requires Zn(2+) as cofactor.

It is found in the cytoplasm. Possible metal-dependent hydrolase. This is Putative metal-dependent hydrolase BLi00869/BLi00870/BL03027 from Bacillus licheniformis (strain ATCC 14580 / DSM 13 / JCM 2505 / CCUG 7422 / NBRC 12200 / NCIMB 9375 / NCTC 10341 / NRRL NRS-1264 / Gibson 46).